A 207-amino-acid polypeptide reads, in one-letter code: Non-structural protein 5 (207 aa).

The DRBM domain occupies 2–69 (DPVSVVHSFA…CVLISNDLKE (68 aa)).

The polypeptide is Non-structural protein 5 (Segment-12) (Banna virus (BAV)).